Here is a 207-residue protein sequence, read N- to C-terminus: Glutathione S-transferase 4 (207 aa).

The 78-residue stretch at 2 to 79 (PNYKLLYFDA…YLARKFGLAG (78 aa)) folds into the GST N-terminal domain. Glutathione contacts are provided by residues Y8, W39, K43, 49-51 (GQL), and 63-64 (QS). The 127-residue stretch at 81–207 (TAEEEAYADS…YVATRKDSIV (127 aa)) folds into the GST C-terminal domain.

The protein belongs to the GST superfamily. Sigma family.

It catalyses the reaction RX + glutathione = an S-substituted glutathione + a halide anion + H(+). Functionally, conjugation of reduced glutathione to a wide number of exogenous and endogenous hydrophobic electrophiles. May play a role in the detoxification of reactive oxygen species produced during pathogenic bacterial infection. This is Glutathione S-transferase 4 from Caenorhabditis elegans.